Consider the following 680-residue polypeptide: Methionine--tRNA ligase (680 aa).

The 'HIGH' region motif lies at 15 to 25 (PYANGSIHLGH). Residues Cys-146, Cys-149, Cys-159, and Cys-162 each contribute to the Zn(2+) site. Positions 332–336 (KMSKS) match the 'KMSKS' region motif. ATP is bound at residue Lys-335. The region spanning 579–680 (DFAKVDMRIA…EGAQPGMRVM (102 aa)) is the tRNA-binding domain.

It belongs to the class-I aminoacyl-tRNA synthetase family. MetG type 1 subfamily. Homodimer. Zn(2+) is required as a cofactor.

The protein resides in the cytoplasm. It catalyses the reaction tRNA(Met) + L-methionine + ATP = L-methionyl-tRNA(Met) + AMP + diphosphate. Functionally, is required not only for elongation of protein synthesis but also for the initiation of all mRNA translation through initiator tRNA(fMet) aminoacylation. This chain is Methionine--tRNA ligase, found in Photobacterium profundum (strain SS9).